A 284-amino-acid polypeptide reads, in one-letter code: Expansin-A17 (284 aa).

The N-terminal stretch at 1–21 is a signal peptide; it reads MASSWNNPAIFLAAALAVATA. An Expansin-like EG45 domain is found at 71–185; that stretch reads GGACGYVSND…RRVPCQRTGG (115 aa). The Expansin-like CBD domain maps to 195–279; that stretch reads YWLLLYVMNV…WWITGLCYQG (85 aa).

This sequence belongs to the expansin family. Expansin A subfamily. Expressed in roots.

Its subcellular location is the secreted. It is found in the cell wall. The protein localises to the membrane. Its function is as follows. May cause loosening and extension of plant cell walls by disrupting non-covalent bonding between cellulose microfibrils and matrix glucans. No enzymatic activity has been found. May be required for rapid internodal elongation in deepwater rice during submergence. The sequence is that of Expansin-A17 (EXPA17) from Oryza sativa subsp. japonica (Rice).